Consider the following 224-residue polypeptide: 7-cyano-7-deazaguanine synthase (224 aa).

Residue L10–V20 coordinates ATP. Residues C189, C199, C202, and C205 each coordinate Zn(2+).

It belongs to the QueC family. Zn(2+) is required as a cofactor.

The catalysed reaction is 7-carboxy-7-deazaguanine + NH4(+) + ATP = 7-cyano-7-deazaguanine + ADP + phosphate + H2O + H(+). It participates in purine metabolism; 7-cyano-7-deazaguanine biosynthesis. Catalyzes the ATP-dependent conversion of 7-carboxy-7-deazaguanine (CDG) to 7-cyano-7-deazaguanine (preQ(0)). This Pseudomonas putida (strain ATCC 700007 / DSM 6899 / JCM 31910 / BCRC 17059 / LMG 24140 / F1) protein is 7-cyano-7-deazaguanine synthase.